We begin with the raw amino-acid sequence, 72 residues long: Translation initiation factor IF-1 (72 aa).

The S1-like domain maps to 1–72; the sequence is MAKDDVIEIQ…TKGRITYRFK (72 aa).

The protein belongs to the IF-1 family. As to quaternary structure, component of the 30S ribosomal translation pre-initiation complex which assembles on the 30S ribosome in the order IF-2 and IF-3, IF-1 and N-formylmethionyl-tRNA(fMet); mRNA recruitment can occur at any time during PIC assembly.

It localises to the cytoplasm. Functionally, one of the essential components for the initiation of protein synthesis. Stabilizes the binding of IF-2 and IF-3 on the 30S subunit to which N-formylmethionyl-tRNA(fMet) subsequently binds. Helps modulate mRNA selection, yielding the 30S pre-initiation complex (PIC). Upon addition of the 50S ribosomal subunit IF-1, IF-2 and IF-3 are released leaving the mature 70S translation initiation complex. The polypeptide is Translation initiation factor IF-1 (Lacticaseibacillus paracasei (strain ATCC 334 / BCRC 17002 / CCUG 31169 / CIP 107868 / KCTC 3260 / NRRL B-441) (Lactobacillus paracasei)).